The primary structure comprises 561 residues: Transmembrane protein 209 (561 aa).

Phosphoserine occurs at positions 9 and 11. A helical transmembrane segment spans residues 28 to 48 (VVLAWGLLNVSMAGMIYTEMT). Asparagine 57 carries N-linked (GlcNAc...) asparagine glycosylation. Residues 60–80 (YWPLWYIELALASLFSLNALF) form a helical membrane-spanning segment. Serine 98 is modified (phosphoserine). 2 disordered regions span residues 119–157 (DLAATQIPPAPPSPSIQGQSVLSYSPSRSPSTSPKFTTS) and 195–234 (FSPSPPSPYPTTVGPVESSGLRSRYRSSPTVYNSPTDKED). The segment covering 133–157 (SIQGQSVLSYSPSRSPSTSPKFTTS) has biased composition (low complexity). A phosphoserine mark is found at serine 201, serine 222, and serine 248. Residues 220-229 (RSSPTVYNSP) are compositionally biased toward polar residues. A disordered region spans residues 250–271 (EEKQHRVKLGSPDSTSPSSSPT). Positions 260–271 (SPDSTSPSSSPT) are enriched in low complexity. Asparagine 274 is a glycosylation site (N-linked (GlcNAc...) asparagine). Serine 278 carries the post-translational modification Phosphoserine.

As to quaternary structure, interacts with NUP205. In terms of tissue distribution, expressed in the testis.

The protein localises to the membrane. The protein resides in the nucleus envelope. It is found in the golgi apparatus. Its subcellular location is the cytoplasm. Its function is as follows. Nuclear envelope protein which in association with NUP205, may be involved in nuclear transport of various nuclear proteins in addition to MYC. The chain is Transmembrane protein 209 (TMEM209) from Homo sapiens (Human).